The primary structure comprises 367 residues: DNA replication and repair protein RecF (367 aa).

31–38 contacts ATP; the sequence is GENGSGKT.

It belongs to the RecF family.

It localises to the cytoplasm. In terms of biological role, the RecF protein is involved in DNA metabolism; it is required for DNA replication and normal SOS inducibility. RecF binds preferentially to single-stranded, linear DNA. It also seems to bind ATP. This Saccharophagus degradans (strain 2-40 / ATCC 43961 / DSM 17024) protein is DNA replication and repair protein RecF.